Reading from the N-terminus, the 217-residue chain is 25 kDa ookinete surface antigen (217 aa).

A signal peptide spans 1–16 (MNKLYSLFLFLFIQLS). The EGF-like 1; truncated domain occupies 30–59 (CKKGFLIQMSGHLECKCENDLVLVNEETCE). EGF-like domains lie at 61–106 (KVLK…NVCI), 106–150 (ILNE…NKCS), and 153–193 (GETK…STCT). 9 disulfide bridges follow: Cys65–Cys80, Cys74–Cys92, Cys94–Cys105, Cys110–Cys120, Cys115–Cys133, Cys135–Cys149, Cys157–Cys168, Cys161–Cys177, and Cys179–Cys192. A glycan (N-linked (GlcNAc...) asparagine) is linked at Asn112. Asn165 and Asn187 each carry an N-linked (GlcNAc...) asparagine glycan. Ser196 is lipidated: GPI-anchor amidated serine. Residues 197-217 (VYNILNLSLIFVLFSVCFFIM) constitute a propeptide, removed in mature form. An N-linked (GlcNAc...) asparagine glycan is attached at Asn202.

Its subcellular location is the cell membrane. This is 25 kDa ookinete surface antigen from Plasmodium reichenowi.